The following is a 185-amino-acid chain: Transcription antitermination protein NusB (185 aa).

This sequence belongs to the NusB family.

Involved in transcription antitermination. Required for transcription of ribosomal RNA (rRNA) genes. Binds specifically to the boxA antiterminator sequence of the ribosomal RNA (rrn) operons. In Rhodospirillum rubrum (strain ATCC 11170 / ATH 1.1.1 / DSM 467 / LMG 4362 / NCIMB 8255 / S1), this protein is Transcription antitermination protein NusB.